The chain runs to 317 residues: Membrane-associated protein VIPP1, chloroplastic (317 aa).

A coiled-coil region spans residues 92-246; that stretch reads EMNDDLTKMR…SQAEALGQLA (155 aa). Positions 265–317 are disordered; it reads DLAQMKKEISGSSSKGELPPGRTAVSNSGAARPFRDIEIENELNELRKKANEY. Positions 297–317 are enriched in basic and acidic residues; it reads PFRDIEIENELNELRKKANEY.

Belongs to the PspA/Vipp/IM30 family. Homomultimer. Complex formation involves interaction via the central alpha-helical domain (71-286). In terms of assembly, (Microbial infection) Interacts with the rice tungro bacilliform virus (RTBV) capsid protein.

Its subcellular location is the plastid. It localises to the chloroplast inner membrane. The protein localises to the chloroplast thylakoid membrane. Functionally, required for plastid vesicle formation and thylakoid membrane biogenesis, but not for functional assembly of thylakoid protein complexes. In Oryza sativa subsp. japonica (Rice), this protein is Membrane-associated protein VIPP1, chloroplastic.